The sequence spans 159 residues: HSP70 co-chaperone SNL1 (159 aa).

Over 1-12 (MSHNAMEHWKSK) the chain is Perinuclear space. The helical; Signal-anchor for type II membrane protein transmembrane segment at 13 to 35 (LSKTSTSTYVLLAVIAVVFLVTI) threads the bilayer. Over 36–159 (RRPNGSKGKS…AMLKSLDSLK (124 aa)) the chain is Cytoplasmic. The interval 39-64 (NGSKGKSSKKRASKKNKKGKNQFEKA) is disordered. Residues 44–58 (KSSKKRASKKNKKGK) show a composition bias toward basic residues. In terms of domain architecture, BAG spans 73–159 (QIDNVSLRYG…AMLKSLDSLK (87 aa)).

As to quaternary structure, interacts with the HSP70 family members SSA1, SSA4, and SSB1. These interactions are strongly reduced by ADP and ATP.

Its subcellular location is the endoplasmic reticulum membrane. It is found in the nucleus membrane. Its function is as follows. Stimulator of ATPase activity of molecular chaperones of the HSP70 family (principally of the SSA class). Stimulation is important for HSP70-substrate complex dissociation after folding of newly synthesized or refolded proteins. SNL1 is probably involved in nuclear pore biogenesis and in particular the folding or refolding of misfolded NUP116, GLE2 and NIC96. The sequence is that of HSP70 co-chaperone SNL1 (SNL1) from Saccharomyces cerevisiae (strain ATCC 204508 / S288c) (Baker's yeast).